We begin with the raw amino-acid sequence, 412 residues long: Serine hydroxymethyltransferase (412 aa).

(6S)-5,6,7,8-tetrahydrofolate-binding positions include L125 and 129–131 (GHL). At K234 the chain carries N6-(pyridoxal phosphate)lysine. E250 lines the (6S)-5,6,7,8-tetrahydrofolate pocket.

Belongs to the SHMT family. Homodimer. Requires pyridoxal 5'-phosphate as cofactor.

Its subcellular location is the cytoplasm. The enzyme catalyses (6R)-5,10-methylene-5,6,7,8-tetrahydrofolate + glycine + H2O = (6S)-5,6,7,8-tetrahydrofolate + L-serine. The protein operates within one-carbon metabolism; tetrahydrofolate interconversion. It participates in amino-acid biosynthesis; glycine biosynthesis; glycine from L-serine: step 1/1. In terms of biological role, catalyzes the reversible interconversion of serine and glycine with tetrahydrofolate (THF) serving as the one-carbon carrier. This reaction serves as the major source of one-carbon groups required for the biosynthesis of purines, thymidylate, methionine, and other important biomolecules. Also exhibits THF-independent aldolase activity toward beta-hydroxyamino acids, producing glycine and aldehydes, via a retro-aldol mechanism. In Deinococcus geothermalis (strain DSM 11300 / CIP 105573 / AG-3a), this protein is Serine hydroxymethyltransferase.